We begin with the raw amino-acid sequence, 137 residues long: Large ribosomal subunit protein uL16 (137 aa).

This sequence belongs to the universal ribosomal protein uL16 family. In terms of assembly, part of the 50S ribosomal subunit.

Functionally, binds 23S rRNA and is also seen to make contacts with the A and possibly P site tRNAs. In Rhodopseudomonas palustris (strain BisB5), this protein is Large ribosomal subunit protein uL16.